Consider the following 138-residue polypeptide: DNA-directed RNA polymerase subunit omega (138 aa).

The tract at residues 101-138 is disordered; sequence AEDDDTLEADGLTIHDGADSDLDLSDDAGQDTDEADED. Acidic residues predominate over residues 119 to 138; it reads DSDLDLSDDAGQDTDEADED.

It belongs to the RNA polymerase subunit omega family. As to quaternary structure, the RNAP catalytic core consists of 2 alpha, 1 beta, 1 beta' and 1 omega subunit. When a sigma factor is associated with the core the holoenzyme is formed, which can initiate transcription.

The catalysed reaction is RNA(n) + a ribonucleoside 5'-triphosphate = RNA(n+1) + diphosphate. Its function is as follows. Promotes RNA polymerase assembly. Latches the N- and C-terminal regions of the beta' subunit thereby facilitating its interaction with the beta and alpha subunits. The sequence is that of DNA-directed RNA polymerase subunit omega from Rhodospirillum rubrum (strain ATCC 11170 / ATH 1.1.1 / DSM 467 / LMG 4362 / NCIMB 8255 / S1).